Reading from the N-terminus, the 158-residue chain is Transcription elongation factor GreA (158 aa).

Residues 47-74 (NSEYDEAKNEQAFTEGRIIQLENMLKNA) adopt a coiled-coil conformation.

Belongs to the GreA/GreB family.

Necessary for efficient RNA polymerase transcription elongation past template-encoded arresting sites. The arresting sites in DNA have the property of trapping a certain fraction of elongating RNA polymerases that pass through, resulting in locked ternary complexes. Cleavage of the nascent transcript by cleavage factors such as GreA or GreB allows the resumption of elongation from the new 3'terminus. GreA releases sequences of 2 to 3 nucleotides. This chain is Transcription elongation factor GreA, found in Clostridium perfringens (strain ATCC 13124 / DSM 756 / JCM 1290 / NCIMB 6125 / NCTC 8237 / Type A).